A 691-amino-acid chain; its full sequence is Elongation factor G (691 aa).

Residues 8–283 enclose the tr-type G domain; that stretch reads EDYRNFGIMA…AVVDFLPSPI (276 aa). GTP is bound by residues 17 to 24, 81 to 85, and 135 to 138; these read AHIDAGKT, DTPGH, and NKMD.

Belongs to the TRAFAC class translation factor GTPase superfamily. Classic translation factor GTPase family. EF-G/EF-2 subfamily.

It is found in the cytoplasm. In terms of biological role, catalyzes the GTP-dependent ribosomal translocation step during translation elongation. During this step, the ribosome changes from the pre-translocational (PRE) to the post-translocational (POST) state as the newly formed A-site-bound peptidyl-tRNA and P-site-bound deacylated tRNA move to the P and E sites, respectively. Catalyzes the coordinated movement of the two tRNA molecules, the mRNA and conformational changes in the ribosome. The protein is Elongation factor G of Xanthobacter autotrophicus (strain ATCC BAA-1158 / Py2).